A 226-amino-acid polypeptide reads, in one-letter code: Ribosome maturation factor RimP (226 aa).

The tract at residues 190-226 (VFPDTTRPQPGGKTGQRKKAQPKKPARGGAPHDDTTD) is disordered. The segment covering 204 to 215 (GQRKKAQPKKPA) has biased composition (basic residues).

The protein belongs to the RimP family.

The protein localises to the cytoplasm. Required for maturation of 30S ribosomal subunits. This chain is Ribosome maturation factor RimP, found in Nitratidesulfovibrio vulgaris (strain DSM 19637 / Miyazaki F) (Desulfovibrio vulgaris).